The sequence spans 725 residues: Kinesin-like protein KIN-8A (725 aa).

The disordered stretch occupies residues 1–32; sequence MPVSTRSKVMKQERNEQENTNLNLPLRNPHQG. Residues 151–481 enclose the Kinesin motor domain; it reads RILVFVRLRP…LHWADRAKEI (331 aa). Position 243–250 (243–250) interacts with ATP; that stretch reads GATGAGKT. Coiled-coil stretches lie at residues 499–541 and 583–617; these read EGAD…AANN and ESLKRTKAEEAVKELQLTVKALKMEMERMKREHGL. 2 disordered regions span residues 652–672 and 691–725; these read GSLRPKEKEKELKSPSHRFAS and SPALDRRKTRSHGLVHQEAPSKLLQPGFARPHMKH. Over residues 655–665 the composition is skewed to basic and acidic residues; the sequence is RPKEKEKELKS.

This sequence belongs to the TRAFAC class myosin-kinesin ATPase superfamily. Kinesin family. KIN-8 subfamily.

The chain is Kinesin-like protein KIN-8A from Arabidopsis thaliana (Mouse-ear cress).